The sequence spans 1264 residues: Ubiquitin carboxyl-terminal hydrolase usp-48 (1264 aa).

The USP domain maps to 108–430; that stretch reads AGLINGGNFC…ACYGLLYRRR (323 aa). C117 functions as the Nucleophile in the catalytic mechanism. H366 (proton acceptor) is an active-site residue. 3 disordered regions span residues 390–415, 522–610, and 630–679; these read IPKP…KEKY, AKGE…IMDT, and TVEV…PVSS. Composition is skewed to basic and acidic residues over residues 403–415 and 532–543; these read KTEK…KEKY and EASENEEKKKNE. Residues 516-547 are a coiled coil; sequence AQEYEVAKGEKKKKKKEASENEEKKKNEEDEA. Positions 565 to 575 are enriched in low complexity; sequence SEPSTSAAATE. Polar residues-rich tracts occupy residues 587–599 and 663–678; these read ETPN…STQV and NGTN…QPVS.

Belongs to the peptidase C19 family. Broadly expressed. Expressed in germline.

It localises to the nucleus. It is found in the chromosome. It catalyses the reaction Thiol-dependent hydrolysis of ester, thioester, amide, peptide and isopeptide bonds formed by the C-terminal Gly of ubiquitin (a 76-residue protein attached to proteins as an intracellular targeting signal).. Recognizes and hydrolyzes the peptide bond at the C-terminal Gly of ubiquitin. Involved in the processing of poly-ubiquitin precursors as well as that of ubiquitinated proteins. Required post-developmentally to restrict the plasticity of epidermal cells, probably by regulating gene expression. This chain is Ubiquitin carboxyl-terminal hydrolase usp-48, found in Caenorhabditis elegans.